We begin with the raw amino-acid sequence, 235 residues long: Venom metalloproteinase antarease-like TserMP_B (235 aa).

Positions 4–233 constitute a Peptidase M12B domain; sequence IVVEYYIVTD…PTASCIFQQC (230 aa). An intrachain disulfide couples Cys137 to Cys228. His161 is a Zn(2+) binding site. Glu162 is a catalytic residue. The Zn(2+) site is built by His165 and His171.

The protein belongs to the venom metalloproteinase (M12B) family. The cofactor is Zn(2+). As to expression, expressed by the venom gland.

Its subcellular location is the secreted. Its activity is regulated as follows. Inhibited by EDTA. In terms of biological role, acts as a metalloprotease. Penetrates intact tissue and specifically cleaves the vesicle-associated membrane protein 2 (VAMP2) (part of the SNARE complex) involved in pancreatic secretion, thus disrupting the normal vesicular traffic. This chain is Venom metalloproteinase antarease-like TserMP_B, found in Tityus serrulatus (Brazilian scorpion).